A 401-amino-acid polypeptide reads, in one-letter code: S-adenosylmethionine synthase (401 aa).

H15 serves as a coordination point for ATP. D17 serves as a coordination point for Mg(2+). A K(+)-binding site is contributed by E43. The L-methionine site is built by E56 and Q99. The interval 99–109 is flexible loop; the sequence is QSPEIGAGVDT. Residues 101 to 132 form a disordered region; it reads PEIGAGVDTSHEVRGSSSTDEDDRQGAGDQGL. Residues 174–176, D254, 260–261, A277, and K281 each bind ATP; these read DGK and RK. An L-methionine-binding site is contributed by D254. K285 serves as a coordination point for L-methionine.

The protein belongs to the AdoMet synthase family. In terms of assembly, homotetramer; dimer of dimers. Requires Mg(2+) as cofactor. K(+) is required as a cofactor.

The protein resides in the cytoplasm. The enzyme catalyses L-methionine + ATP + H2O = S-adenosyl-L-methionine + phosphate + diphosphate. It participates in amino-acid biosynthesis; S-adenosyl-L-methionine biosynthesis; S-adenosyl-L-methionine from L-methionine: step 1/1. Its function is as follows. Catalyzes the formation of S-adenosylmethionine (AdoMet) from methionine and ATP. The overall synthetic reaction is composed of two sequential steps, AdoMet formation and the subsequent tripolyphosphate hydrolysis which occurs prior to release of AdoMet from the enzyme. The chain is S-adenosylmethionine synthase from Corynebacterium urealyticum (strain ATCC 43042 / DSM 7109).